Reading from the N-terminus, the 206-residue chain is Large ribosomal subunit protein eL13y (206 aa).

A disordered region spans residues 182 to 206; it reads LERTNKRHAGARAKRAADAEKEEKK. Residues 186 to 195 show a composition bias toward basic residues; that stretch reads NKRHAGARAK. A compositionally biased stretch (basic and acidic residues) spans 196-206; the sequence is RAADAEKEEKK.

It belongs to the eukaryotic ribosomal protein eL13 family.

The protein is Large ribosomal subunit protein eL13y of Brassica napus (Rape).